The chain runs to 1103 residues: Activity-dependent neuroprotector homeobox protein (1103 aa).

Residues K39 and K72 each participate in a glycyl lysine isopeptide (Lys-Gly) (interchain with G-Cter in SUMO2) cross-link. A C2H2-type 1; degenerate zinc finger spans residues 74 to 97 (FCCSACPFSSKFFSAYKSHFRNVH). A Phosphoserine modification is found at S98. The C2H2-type 2; degenerate zinc finger occupies 107–129 (LNCPYCTFNADKKTLETHIKIFH). Positions 133–154 (SSAPSSSLSTFKDKNKNDGLKP) are disordered. Over residues 143-154 (FKDKNKNDGLKP) the composition is skewed to basic and acidic residues. Residues K144 and K155 each participate in a glycyl lysine isopeptide (Lys-Gly) (interchain with G-Cter in SUMO2) cross-link. The C2H2-type 3; degenerate zinc-finger motif lies at 165 to 188 (YYCKKCTYRDPLYEIVRKHIYREH). Residues K203, K231, K266, K274, K278, K279, K311, and K335 each participate in a glycyl lysine isopeptide (Lys-Gly) (interchain with G-Cter in SUMO2) cross-link. A C2H2-type 4; degenerate zinc finger spans residues 221 to 244 (IHCKRCLFMPKSYEALVQHVIEDH). R348 carries the post-translational modification Asymmetric dimethylarginine. A neuroprotective peptide (NAP) region spans residues 354–361 (NAPVSIPQ). The interval 360–439 (PQQSQSVKQL…PAATGPPPSN (80 aa)) is disordered. Residues K367 and K408 each participate in a glycyl lysine isopeptide (Lys-Gly) (interchain with G-Cter in SUMO2) cross-link. Positions 393–423 (SLQTANTSSLPPGQVKSPSVSQSQASRVLGQ) are enriched in polar residues. Phosphoserine occurs at positions 409 and 413. K427 participates in a covalent cross-link: Glycyl lysine isopeptide (Lys-Gly) (interchain with G-Cter in SUMO2). Residues 427–438 (KPPPAATGPPPS) are compositionally biased toward pro residues. A C2H2-type 5; atypical zinc finger spans residues 447 to 469 (KICTICNELFPENVYSVHFEKEH). C2H2-type zinc fingers lie at residues 489 to 510 (SKCL…MLIH) and 512 to 535 (LSCP…RMVH). Residues K600 and K606 each participate in a glycyl lysine isopeptide (Lys-Gly) (interchain with G-Cter in SUMO2) cross-link. Phosphoserine is present on S608. Glycyl lysine isopeptide (Lys-Gly) (interchain with G-Cter in SUMO2) cross-links involve residues K616, K621, K632, and K658. The segment at 622 to 647 (TLCPLCFSILKGPISDALAHHLRERH) adopts a C2H2-type 8; atypical zinc-finger fold. The C2H2-type 9; atypical zinc-finger motif lies at 662–686 (YKCIHCLGVYTSNMTASTITLHLVH). The interval 691–712 (GKTQNGQDKTNAPSRLNQSPGL) is disordered. Over residues 692-710 (KTQNGQDKTNAPSRLNQSP) the composition is skewed to polar residues. K699 participates in a covalent cross-link: Glycyl lysine isopeptide (Lys-Gly) (interchain with G-Cter in SUMO2). S709 carries the phosphoserine modification. Residues K716, K728, and K731 each participate in a glycyl lysine isopeptide (Lys-Gly) (interchain with G-Cter in SUMO2) cross-link. At S738 the chain carries Phosphoserine. Residue K745 forms a Glycyl lysine isopeptide (Lys-Gly) (interchain with G-Cter in SUMO2) linkage. Positions 754–814 (LDPKGHEDDS…SNKRKKCVRD (61 aa)) form a DNA-binding region, homeobox. At S805 the chain carries Phosphoserine. Glycyl lysine isopeptide (Lys-Gly) (interchain with G-Cter in SUMO2) cross-links involve residues K807, K829, and K835. Positions 873–1029 (DSFSDSFEHL…VQDDTEQLKW (157 aa)) are disordered. Phosphoserine is present on residues S876, S878, S886, S889, and S905. Residues K914, K929, and K936 each participate in a glycyl lysine isopeptide (Lys-Gly) (interchain with G-Cter in SUMO2) cross-link. Over residues 922–954 (ESEKLDQKEEEDGSKYETIHLTEERAKLMHDAS) the composition is skewed to basic and acidic residues. A phosphoserine mark is found at S954 and S956. The segment covering 972–982 (PSESGPGSRQV) has biased composition (polar residues). A Glycyl lysine isopeptide (Lys-Gly) (interchain with G-Cter in SUMO2) cross-link involves residue K1017. N6-acetyllysine; alternate is present on residues K1036 and K1043. Residues K1036 and K1043 each participate in a glycyl lysine isopeptide (Lys-Gly) (interchain with G-Cter in SUMO2); alternate cross-link. The segment at 1045–1103 (QSQWENASENAERLPNPQIEWQNSTIDSEDGEQFDSMTDGVADPMHGSLTGVKLSSQQA) is disordered. S1072 is subject to Phosphoserine.

As to quaternary structure, interacts (via N-terminal region) with beta-catenin/CTNNB1 (via the central armadillo domains); interaction is direct and stabilizes CTNNB1 by modulating its phosphorylation by glycogen synthase kinase-3 beta GSK3B.

It is found in the nucleus. It localises to the chromosome. May be involved in transcriptional regulation. May mediate some of the neuroprotective peptide VIP-associated effects involving normal growth and cancer proliferation. Positively modulates WNT-beta-catenin/CTNN1B signaling, acting by regulating phosphorylation of, and thereby stabilizing, CTNNB1. May be required for neural induction and neuronal differentiation. May be involved in erythroid differentiation. In Rattus norvegicus (Rat), this protein is Activity-dependent neuroprotector homeobox protein (Adnp).